The sequence spans 440 residues: APO protein 2, chloroplastic (440 aa).

The N-terminal 62 residues, 1–62 (MSITYSAISF…SLQLNSRVVL (62 aa)), are a transit peptide targeting the chloroplast. The segment covering 106–115 (ARERVKNNKD) has biased composition (basic and acidic residues). Residues 106–126 (ARERVKNNKDKPKRPLPPPKN) form a disordered region. APO domains lie at 162–247 (ACGW…EIPE) and 332–417 (VCGY…VVPE).

This sequence belongs to the APO family.

The protein localises to the plastid. It localises to the chloroplast. In terms of biological role, may be involved in the stable assembly of several 4Fe-4S cluster-containing complexes of chloroplasts. This is APO protein 2, chloroplastic (APO2) from Arabidopsis thaliana (Mouse-ear cress).